The primary structure comprises 258 residues: Imidazole glycerol phosphate synthase subunit HisF (258 aa).

Catalysis depends on residues Asp-11 and Asp-130.

Belongs to the HisA/HisF family. As to quaternary structure, heterodimer of HisH and HisF.

The protein localises to the cytoplasm. The enzyme catalyses 5-[(5-phospho-1-deoxy-D-ribulos-1-ylimino)methylamino]-1-(5-phospho-beta-D-ribosyl)imidazole-4-carboxamide + L-glutamine = D-erythro-1-(imidazol-4-yl)glycerol 3-phosphate + 5-amino-1-(5-phospho-beta-D-ribosyl)imidazole-4-carboxamide + L-glutamate + H(+). It functions in the pathway amino-acid biosynthesis; L-histidine biosynthesis; L-histidine from 5-phospho-alpha-D-ribose 1-diphosphate: step 5/9. IGPS catalyzes the conversion of PRFAR and glutamine to IGP, AICAR and glutamate. The HisF subunit catalyzes the cyclization activity that produces IGP and AICAR from PRFAR using the ammonia provided by the HisH subunit. The chain is Imidazole glycerol phosphate synthase subunit HisF from Xanthomonas oryzae pv. oryzae (strain MAFF 311018).